The chain runs to 146 residues: Large ribosomal subunit protein uL15 (146 aa).

Residues 1–51 (MKLHELQPAAGSRKVRNRVGRGTSSGNGKTAGRGQKGQKARSGGGVRLGFE) form a disordered region. Composition is skewed to gly residues over residues 23–35 (TSSG…GRGQ) and 42–51 (SGGGVRLGFE).

Belongs to the universal ribosomal protein uL15 family. Part of the 50S ribosomal subunit.

Binds to the 23S rRNA. In Streptococcus gordonii (strain Challis / ATCC 35105 / BCRC 15272 / CH1 / DL1 / V288), this protein is Large ribosomal subunit protein uL15.